The chain runs to 96 residues: MLPKATVKRIMKQHTDFNISAEAVDELCNMLEEIIKITTEVAEQNARKEGRKTIKARDIKQCDDERLKRKIMELSERTDKMPILIKEMLNVITSEL.

Residues 52-55 (KTIK) are interaction with DNA.

Belongs to the archaeal histone HMF family. Homodimer. Dimers then assemble into higher oligomers, with the DNA wrapped around the protein core.

It localises to the cytoplasm. The protein resides in the chromosome. In terms of biological role, binds and compact DNA (95 to 150 base pairs) to form nucleosome-like structures that contain positive DNA supercoils. Increases the resistance of DNA to thermal denaturation (in vitro). This chain is DNA-binding protein HmvA (hmvA), found in Methanocaldococcus jannaschii (strain ATCC 43067 / DSM 2661 / JAL-1 / JCM 10045 / NBRC 100440) (Methanococcus jannaschii).